We begin with the raw amino-acid sequence, 93 residues long: UPF0728 protein C10orf53 homolog (93 aa).

The protein belongs to the UPF0728 family.

In Bos taurus (Bovine), this protein is UPF0728 protein C10orf53 homolog.